The primary structure comprises 173 residues: Bifunctional protein PyrR (173 aa).

Positions 93-105 (VILVDDVLYTGRT) match the PRPP-binding motif.

Belongs to the purine/pyrimidine phosphoribosyltransferase family. PyrR subfamily. In terms of assembly, homodimer and homohexamer; in equilibrium.

It carries out the reaction UMP + diphosphate = 5-phospho-alpha-D-ribose 1-diphosphate + uracil. In terms of biological role, regulates transcriptional attenuation of the pyrimidine nucleotide (pyr) operon by binding in a uridine-dependent manner to specific sites on pyr mRNA. This disrupts an antiterminator hairpin in the RNA and favors formation of a downstream transcription terminator, leading to a reduced expression of downstream genes. Its function is as follows. Also displays a weak uracil phosphoribosyltransferase activity which is not physiologically significant. The polypeptide is Bifunctional protein PyrR (Streptococcus thermophilus (strain ATCC BAA-491 / LMD-9)).